A 2275-amino-acid polypeptide reads, in one-letter code: Serine-rich adhesin for platelets (2275 aa).

The first 89 residues, 1-89, serve as a signal peptide directing secretion; that stretch reads MSKRQKEFHD…VNMLHDQQAF (89 aa). The segment at 90–230 is serine-rich repeat region 1, SRR1; it reads AASDAPLTSE…KTSTTSTSTA (141 aa). Residues 100–111 show a composition bias toward polar residues; the sequence is LNTQSETVGNQN. Disordered regions lie at residues 100–229 and 751–2247; these read LNTQ…STST and NSMS…GLLG. A compositionally biased stretch (low complexity) spans 112–128; the sequence is STTIEASTSTADSTSVT. Residues 129–140 are compositionally biased toward polar residues; it reads KNSSSVQTSNSD. Residues 150–229 show a composition bias toward low complexity; that stretch reads VTSTTNSTSN…NKTSTTSTST (80 aa). Positions 231–751 are non-repeat region (NRR); sequence PVKLRTFSRL…TTFKYEVTRN (521 aa). Composition is skewed to low complexity over residues 752–1392 and 1402–2218; these read SMSD…LSLS and SNSA…ATSE. The tract at residues 752–2236 is serine-rich repeat region 2, SRR2; that stretch reads SMSDSVSTSG…AQSEKRLPDT (1485 aa). Positions 2233 to 2237 match the LPXTG sorting signal motif; that stretch reads LPDTG. Pentaglycyl murein peptidoglycan amidated threonine is present on threonine 2236. A propeptide spans 2237 to 2275 (removed by sortase); sequence GDSIKQNGLLGGVMTLLVGLGLMKRKKKKDENDQDDSQA.

This sequence belongs to the serine-rich repeat protein (SRRP) family. In terms of processing, proteolytically cleaved by a metalloprotease. Glycosylated. It is probable that most of the Ser residues in SSR1 and SSR2 are O-GlcNAcylated. Sequential glycosylation by sugar transferases are able to generate complex sugar polymorphisms.

The protein localises to the secreted. The protein resides in the cell wall. Mediates binding to human platelets, possibly through a receptor-ligand interaction. Probably associated with virulence in endovascular infection. The polypeptide is Serine-rich adhesin for platelets (sraP) (Staphylococcus aureus (strain MSSA476)).